The sequence spans 257 residues: UPF0246 protein Shal_1126 (257 aa).

It belongs to the UPF0246 family.

The protein is UPF0246 protein Shal_1126 of Shewanella halifaxensis (strain HAW-EB4).